A 258-amino-acid polypeptide reads, in one-letter code: Imidazole glycerol phosphate synthase subunit HisF (258 aa).

Catalysis depends on residues D11 and D130.

This sequence belongs to the HisA/HisF family. Heterodimer of HisH and HisF.

It localises to the cytoplasm. The enzyme catalyses 5-[(5-phospho-1-deoxy-D-ribulos-1-ylimino)methylamino]-1-(5-phospho-beta-D-ribosyl)imidazole-4-carboxamide + L-glutamine = D-erythro-1-(imidazol-4-yl)glycerol 3-phosphate + 5-amino-1-(5-phospho-beta-D-ribosyl)imidazole-4-carboxamide + L-glutamate + H(+). Its pathway is amino-acid biosynthesis; L-histidine biosynthesis; L-histidine from 5-phospho-alpha-D-ribose 1-diphosphate: step 5/9. Its function is as follows. IGPS catalyzes the conversion of PRFAR and glutamine to IGP, AICAR and glutamate. The HisF subunit catalyzes the cyclization activity that produces IGP and AICAR from PRFAR using the ammonia provided by the HisH subunit. The polypeptide is Imidazole glycerol phosphate synthase subunit HisF (Photorhabdus laumondii subsp. laumondii (strain DSM 15139 / CIP 105565 / TT01) (Photorhabdus luminescens subsp. laumondii)).